Here is a 654-residue protein sequence, read N- to C-terminus: Probable replication restart protein PriA (654 aa).

Zn(2+) contacts are provided by cysteine 367, cysteine 370, cysteine 376, cysteine 379, cysteine 395, cysteine 398, cysteine 407, and cysteine 410.

Belongs to the helicase family. PriA subfamily. As to quaternary structure, component of the replication restart primosome. It depends on Zn(2+) as a cofactor.

In terms of biological role, initiates the restart of stalled replication forks, which reloads the replicative helicase on sites other than the origin of replication. Recognizes and binds to abandoned replication forks and remodels them to uncover a helicase loading site. Promotes assembly of the primosome at these replication forks. This chain is Probable replication restart protein PriA, found in Mycobacterium tuberculosis (strain CDC 1551 / Oshkosh).